A 320-amino-acid chain; its full sequence is Lactamase-like protein GME11357 (320 aa).

Zn(2+)-binding residues include His-106, His-108, Asp-110, and His-111. Catalysis depends on Asp-110, which acts as the Proton donor/acceptor.

Belongs to the metallo-beta-lactamase superfamily. Zn(2+) is required as a cofactor.

It functions in the pathway secondary metabolite biosynthesis. In terms of biological role, lactamase-like protein; part of the gene cluster that mediates the biosynthesis of dibenzodioxocinones such as pestalotiollide B, a novel class of inhibitors against cholesterol ester transfer protein (CEPT). The biosynthesis initiates from condensation of acetate and malonate units catalyzed by the non-reducing PKS pks8/GME11356. Pks8/GME11356 lacks a thioesterase (TE) domain, which is important to the cyclizing of the third ring of atrochrysone carboxylic acid, and the esterase GME11355 might play the role of TE and catalyzes the cyclization reaction of the C ring. The lactamase-like protein GME11357 (or other beta-lactamases in Pestalotiopsis microspora) probably hydrolyzes the thioester bond between the ACP of pks8/GME11356 and the intermediate to release atrochrysone carboxylic acid, which is spontaneously dehydrates to form endocrocin anthrone. Endocrocin anthrone is further converted to emodin via the endocrocin intermediate. Emodin is then oxidized by several enzymes such as the Baeyer-Villiger oxidase GME11358, the oxidoreductase GME11367, the short chain dehydrogenase/reductase GME11373, as well as by other oxidoreductases from the cluster, to modify the A and C rings and open the B ring, and finally yield monodictyphenone. The prenyltransferase GME11375 may catalyze the addition reaction between the C5 side chains and the carbon bone of dibenzodioxocinones. The remaining biochemical reactions to the final product dibenzodioxocinones should be methylation catalyzed by methyltransferase GME11366 and reduction and lactonization reaction catalyzed by a series of oxidordeuctases. The protein is Lactamase-like protein GME11357 of Pestalotiopsis microspora.